A 450-amino-acid chain; its full sequence is Homogentisate 1,2-dioxygenase (450 aa).

His-304 serves as the catalytic Proton acceptor. Residues His-347 and Glu-353 each coordinate Fe cation. Homogentisate-binding residues include Tyr-362 and His-383. Residue His-383 coordinates Fe cation.

The protein belongs to the homogentisate dioxygenase family. Hexamer; dimer of trimers. It depends on Fe cation as a cofactor.

It carries out the reaction homogentisate + O2 = 4-maleylacetoacetate + H(+). The protein operates within amino-acid degradation; L-phenylalanine degradation; acetoacetate and fumarate from L-phenylalanine: step 4/6. In terms of biological role, involved in the catabolism of homogentisate (2,5-dihydroxyphenylacetate or 2,5-OH-PhAc), a central intermediate in the degradation of phenylalanine and tyrosine. Catalyzes the oxidative ring cleavage of the aromatic ring of homogentisate to yield maleylacetoacetate. This chain is Homogentisate 1,2-dioxygenase, found in Burkholderia mallei (strain NCTC 10229).